The following is a 53-amino-acid chain: Natriuretic peptide DNP-2 (53 aa).

The cysteines at positions 7 and 23 are disulfide-linked. Residues 39-53 constitute a propeptide that is removed on maturation; it reads IIRDLHPDSKQSQAA.

The protein belongs to the natriuretic peptide family. As to expression, expressed by the venom gland.

It is found in the secreted. In terms of biological role, exhibits vasodilator, natriuretic and diuretic properties in animal models and human tissues. Acts by stimulating cGMP via the natriuretic peptide receptor 1 (NPR1). Is a poor agonist of the atrial natriuretic peptide receptor 2 (NPR2). Is not degraded by neutral endopeptidase (NEP/MME). Binds to atrial natriuretic peptide clearance receptor (NPR-C/NPR3), which may be responsible of the removal of DNP from the circulation. Increases calcium uptake and induces histamine release from rat peritoneal mast cells. Increases calcium-activated potassium (KCa) current in gastric antral circular smooth muscle cells by increasing cGMP production and activating inositol trisphosphate receptors (IP3Rs). In vivo, reduces both systolic and diastolic blood pressure with no effect on heart rate, when intravenously injected in conscious rabbits. The sequence is that of Natriuretic peptide DNP-2 from Dendroaspis angusticeps (Eastern green mamba).